Here is a 332-residue protein sequence, read N- to C-terminus: Anthranilate phosphoribosyltransferase (332 aa).

5-phospho-alpha-D-ribose 1-diphosphate contacts are provided by residues Gly79, 82-83, Ser87, 89-92, 107-115, and Ser119; these read GD, NIST, and KHGNRSVSS. Gly79 is an anthranilate binding site. Ser91 serves as a coordination point for Mg(2+). Asn110 provides a ligand contact to anthranilate. Residue Arg165 coordinates anthranilate. 2 residues coordinate Mg(2+): Asp223 and Glu224.

The protein belongs to the anthranilate phosphoribosyltransferase family. In terms of assembly, homodimer. The cofactor is Mg(2+).

It catalyses the reaction N-(5-phospho-beta-D-ribosyl)anthranilate + diphosphate = 5-phospho-alpha-D-ribose 1-diphosphate + anthranilate. It participates in amino-acid biosynthesis; L-tryptophan biosynthesis; L-tryptophan from chorismate: step 2/5. Its function is as follows. Catalyzes the transfer of the phosphoribosyl group of 5-phosphorylribose-1-pyrophosphate (PRPP) to anthranilate to yield N-(5'-phosphoribosyl)-anthranilate (PRA). The sequence is that of Anthranilate phosphoribosyltransferase from Sodalis glossinidius (strain morsitans).